The primary structure comprises 302 residues: Sulfate adenylyltransferase subunit 2 (302 aa).

Belongs to the PAPS reductase family. CysD subfamily. Heterodimer composed of CysD, the smaller subunit, and CysN.

The enzyme catalyses sulfate + ATP + H(+) = adenosine 5'-phosphosulfate + diphosphate. It functions in the pathway sulfur metabolism; hydrogen sulfide biosynthesis; sulfite from sulfate: step 1/3. Its function is as follows. With CysN forms the ATP sulfurylase (ATPS) that catalyzes the adenylation of sulfate producing adenosine 5'-phosphosulfate (APS) and diphosphate, the first enzymatic step in sulfur assimilation pathway. APS synthesis involves the formation of a high-energy phosphoric-sulfuric acid anhydride bond driven by GTP hydrolysis by CysN coupled to ATP hydrolysis by CysD. This is Sulfate adenylyltransferase subunit 2 from Psychromonas ingrahamii (strain DSM 17664 / CCUG 51855 / 37).